Consider the following 259-residue polypeptide: Acyl-[acyl-carrier-protein]--UDP-N-acetylglucosamine O-acyltransferase (259 aa).

It belongs to the transferase hexapeptide repeat family. LpxA subfamily. In terms of assembly, homotrimer.

It localises to the cytoplasm. It carries out the reaction a (3R)-hydroxyacyl-[ACP] + UDP-N-acetyl-alpha-D-glucosamine = a UDP-3-O-[(3R)-3-hydroxyacyl]-N-acetyl-alpha-D-glucosamine + holo-[ACP]. It functions in the pathway glycolipid biosynthesis; lipid IV(A) biosynthesis; lipid IV(A) from (3R)-3-hydroxytetradecanoyl-[acyl-carrier-protein] and UDP-N-acetyl-alpha-D-glucosamine: step 1/6. In terms of biological role, involved in the biosynthesis of lipid A, a phosphorylated glycolipid that anchors the lipopolysaccharide to the outer membrane of the cell. The chain is Acyl-[acyl-carrier-protein]--UDP-N-acetylglucosamine O-acyltransferase from Psychrobacter sp. (strain PRwf-1).